An 83-amino-acid polypeptide reads, in one-letter code: MALKTWLLCLLLLSLVLPGASSRAHQHSMETRTPDINPAWYTGRGIRPVGRFGRRRATPRDVTGLGQLSCLPLDGRTKFSQRG.

A signal peptide spans 1–21 (MALKTWLLCLLLLSLVLPGAS). F52 bears the Phenylalanine amide mark. Positions 57-83 (ATPRDVTGLGQLSCLPLDGRTKFSQRG) are excised as a propeptide.

As to expression, widely expressed, with highest levels in medulla oblongata and hypothalamus.

It is found in the secreted. Stimulates prolactin (PRL) release and regulates the expression of prolactin through its receptor GPR10. May stimulate lactotrophs directly to secrete PRL. In Rattus norvegicus (Rat), this protein is Prolactin-releasing peptide (Prlh).